The following is a 226-amino-acid chain: Neuron-specific vesicular protein calcyon (226 aa).

The tract at residues 1–23 (MVKLGCSFSGKPGKETGDQDGAA) is disordered. At 1-88 (MVKLGCSFSG…EEGRRLPTAR (88 aa)) the chain is on the extracellular side. A helical membrane pass occupies residues 89–109 (MIAFAMALLGCVLIMYKAIWY). Over 110-226 (DQFTCPDGFL…AEDVPSQSPK (117 aa)) the chain is Cytoplasmic. A disordered region spans residues 189–226 (TAAAAAAAEGNEPSGKPLDMREKEDPQKAEDVPSQSPK). The span at 206-219 (LDMREKEDPQKAED) shows a compositional bias: basic and acidic residues.

It belongs to the NSG family. As to quaternary structure, interacts with CLTA. As to expression, expressed exclusively in neurons (at protein level). In all age groups, expressed at significantly higher levels in the medial prefrontal and orbital frontal cortices of spontaneously hypertensive rats (SHR), a model of attention deficit-hyperactivity disorder, than Wistar Kyoto (WKY) animals. In the motor cortex, dorsal striatum and nucleus accumbens, expression is significantly elevated in SHR only in younger animals.

Its subcellular location is the cytoplasmic vesicle membrane. The protein localises to the cell membrane. Functionally, interacts with clathrin light chain A and stimulates clathrin self-assembly and clathrin-mediated endocytosis. The polypeptide is Neuron-specific vesicular protein calcyon (Caly) (Rattus norvegicus (Rat)).